A 666-amino-acid chain; its full sequence is Non-receptor tyrosine-protein kinase TNK1 (666 aa).

Residue serine 96 is modified to Phosphoserine. The 268-residue stretch at 116 to 383 folds into the Protein kinase domain; the sequence is VRRGELLGSG…LEGLLQEAWL (268 aa). ATP is bound by residues 122 to 130 and lysine 148; that span reads LGSGCFGVV. The Proton acceptor role is filled by aspartate 245. Position 255 is a phosphoserine (serine 255). Residues 381 to 441 form the SH3 domain; that stretch reads AWLSEGRCVR…PASAVTLADL (61 aa). Residues 442 to 589 form a disordered region; it reads GGSPVTHPAH…VPSGGPLSDP (148 aa). Basic and acidic residues predominate over residues 457-473; it reads HGEKCRGGTDGDREKAT. A Phosphoserine modification is found at serine 498. Phosphothreonine is present on threonine 510. The residue at position 515 (serine 515) is a Phosphoserine. Over residues 531 to 544 the composition is skewed to pro residues; that stretch reads DLPPRPPDLPPRPP. Residue serine 582 is modified to Phosphoserine.

It belongs to the protein kinase superfamily. Tyr protein kinase family. Interacts with the SH3 domain of PLCG1 via its Pro-rich domain. Post-translationally, autophosphorylated on tyrosine residues. In terms of tissue distribution, expressed in whole embryo and all adult tissues examined including liver, kidney, heart, brain, skeletal muscle and intestine. Also detected in various myeloid- and lymphoid-derived cell lines.

It localises to the membrane. Its subcellular location is the cytoplasm. The enzyme catalyses L-tyrosyl-[protein] + ATP = O-phospho-L-tyrosyl-[protein] + ADP + H(+). In terms of biological role, may function in signaling pathways utilized broadly during fetal development and more selectively in adult tissues and in cells of the lymphohematopoietic system. Could specifically be involved in phospholipid signal transduction. Involved in negative regulation of cell growth. Has tumor suppressor properties. Plays a negative regulatory role in the Ras-MAPK pathway. The chain is Non-receptor tyrosine-protein kinase TNK1 from Mus musculus (Mouse).